Consider the following 515-residue polypeptide: Protein nucleotidyltransferase YdiU (515 aa).

ATP is bound by residues G101, G103, R104, K124, D136, G137, R194, and R201. D269 acts as the Proton acceptor in catalysis. Mg(2+) contacts are provided by N270 and D279. D279 serves as a coordination point for ATP.

It belongs to the SELO family. Mg(2+) is required as a cofactor. Requires Mn(2+) as cofactor.

It catalyses the reaction L-seryl-[protein] + ATP = 3-O-(5'-adenylyl)-L-seryl-[protein] + diphosphate. It carries out the reaction L-threonyl-[protein] + ATP = 3-O-(5'-adenylyl)-L-threonyl-[protein] + diphosphate. The enzyme catalyses L-tyrosyl-[protein] + ATP = O-(5'-adenylyl)-L-tyrosyl-[protein] + diphosphate. The catalysed reaction is L-histidyl-[protein] + UTP = N(tele)-(5'-uridylyl)-L-histidyl-[protein] + diphosphate. It catalyses the reaction L-seryl-[protein] + UTP = O-(5'-uridylyl)-L-seryl-[protein] + diphosphate. It carries out the reaction L-tyrosyl-[protein] + UTP = O-(5'-uridylyl)-L-tyrosyl-[protein] + diphosphate. In terms of biological role, nucleotidyltransferase involved in the post-translational modification of proteins. It can catalyze the addition of adenosine monophosphate (AMP) or uridine monophosphate (UMP) to a protein, resulting in modifications known as AMPylation and UMPylation. This chain is Protein nucleotidyltransferase YdiU, found in Cytophaga hutchinsonii (strain ATCC 33406 / DSM 1761 / CIP 103989 / NBRC 15051 / NCIMB 9469 / D465).